A 310-amino-acid polypeptide reads, in one-letter code: tRNA dimethylallyltransferase (310 aa).

14–21 (GPTASGKT) contributes to the ATP binding site. Residue 16 to 21 (TASGKT) participates in substrate binding. Interaction with substrate tRNA stretches follow at residues 39–42 (DSAL), 163–167 (QRLSR), and 244–249 (RCVGYR).

It belongs to the IPP transferase family. Monomer. Mg(2+) serves as cofactor.

It catalyses the reaction adenosine(37) in tRNA + dimethylallyl diphosphate = N(6)-dimethylallyladenosine(37) in tRNA + diphosphate. Catalyzes the transfer of a dimethylallyl group onto the adenine at position 37 in tRNAs that read codons beginning with uridine, leading to the formation of N6-(dimethylallyl)adenosine (i(6)A). This is tRNA dimethylallyltransferase from Aeromonas salmonicida (strain A449).